We begin with the raw amino-acid sequence, 411 residues long: Probable indole-3-pyruvate monooxygenase YUCCA4 (411 aa).

Residue 21–26 coordinates FAD; sequence GAGPSG. An NADP(+)-binding site is contributed by 183–188; it reads GCGNSG.

This sequence belongs to the FMO family. The cofactor is FAD. In terms of tissue distribution, expressed in leaves, stems, flowers, buds and siliques. Detected in the apical gynoecium and in the developing ovules.

It localises to the cytoplasm. Its subcellular location is the endoplasmic reticulum membrane. It carries out the reaction indole-3-pyruvate + NADPH + O2 + H(+) = (indol-3-yl)acetate + CO2 + NADP(+) + H2O. It participates in plant hormone metabolism; auxin biosynthesis. In terms of biological role, involved in auxin biosynthesis. Both isoforms are catalitically active. Involved during embryogenesis and seedling development. Required for the formation of floral organs and vascular tissues. Belongs to the set of redundant YUCCA genes probably responsible for auxin biosynthesis in shoots. The chain is Probable indole-3-pyruvate monooxygenase YUCCA4 (YUC4) from Arabidopsis thaliana (Mouse-ear cress).